The chain runs to 224 residues: tRNA (guanine-N(7)-)-methyltransferase (224 aa).

S-adenosyl-L-methionine contacts are provided by E56, E81, D108, and D131. Residue D131 is part of the active site. Substrate contacts are provided by residues K135, D167, and 202–205; that span reads TKFE.

This sequence belongs to the class I-like SAM-binding methyltransferase superfamily. TrmB family.

It carries out the reaction guanosine(46) in tRNA + S-adenosyl-L-methionine = N(7)-methylguanosine(46) in tRNA + S-adenosyl-L-homocysteine. Its pathway is tRNA modification; N(7)-methylguanine-tRNA biosynthesis. Functionally, catalyzes the formation of N(7)-methylguanine at position 46 (m7G46) in tRNA. The chain is tRNA (guanine-N(7)-)-methyltransferase from Nitrosomonas eutropha (strain DSM 101675 / C91 / Nm57).